The primary structure comprises 433 residues: 23S rRNA (uracil(1939)-C(5))-methyltransferase RlmD (433 aa).

One can recognise a TRAM domain in the interval 10–68 (RTTTRQIITVSVNDLDSFGQGVARHNGKTLFIPGLLPQENAEVTVTEDKKQYARAKVVR). [4Fe-4S] cluster-binding residues include cysteine 81, cysteine 87, cysteine 90, and cysteine 162. The S-adenosyl-L-methionine site is built by glutamine 265, phenylalanine 294, asparagine 299, glutamate 315, asparagine 342, and aspartate 363. Cysteine 389 serves as the catalytic Nucleophile.

It belongs to the class I-like SAM-binding methyltransferase superfamily. RNA M5U methyltransferase family. RlmD subfamily.

The catalysed reaction is uridine(1939) in 23S rRNA + S-adenosyl-L-methionine = 5-methyluridine(1939) in 23S rRNA + S-adenosyl-L-homocysteine + H(+). Catalyzes the formation of 5-methyl-uridine at position 1939 (m5U1939) in 23S rRNA. The sequence is that of 23S rRNA (uracil(1939)-C(5))-methyltransferase RlmD from Shigella boydii serotype 4 (strain Sb227).